A 179-amino-acid polypeptide reads, in one-letter code: Large ribosomal subunit protein uL6 (179 aa).

This sequence belongs to the universal ribosomal protein uL6 family. Part of the 50S ribosomal subunit.

In terms of biological role, this protein binds to the 23S rRNA, and is important in its secondary structure. It is located near the subunit interface in the base of the L7/L12 stalk, and near the tRNA binding site of the peptidyltransferase center. In Alkaliphilus metalliredigens (strain QYMF), this protein is Large ribosomal subunit protein uL6.